Here is a 213-residue protein sequence, read N- to C-terminus: Glutathione S-transferase PARB (213 aa).

Residues 1–82 (MAIKVHGSPM…YIAHVYADNG (82 aa)) enclose the GST N-terminal domain. Glutathione is bound by residues serine 11, 12 to 13 (TA), 40 to 41 (HK), 53 to 54 (QV), and 66 to 67 (ES). One can recognise a GST C-terminal domain in the interval 89–213 (DPKKMPSMSV…WVKGLEKLQK (125 aa)).

The protein belongs to the GST superfamily. Phi family.

The enzyme catalyses RX + glutathione = an S-substituted glutathione + a halide anion + H(+). Conjugation of reduced glutathione to a wide number of exogenous and endogenous hydrophobic electrophiles. In Nicotiana tabacum (Common tobacco), this protein is Glutathione S-transferase PARB.